A 339-amino-acid chain; its full sequence is Aspartate carbamoyltransferase catalytic subunit (339 aa).

Carbamoyl phosphate is bound by residues arginine 59 and threonine 60. Lysine 87 serves as a coordination point for L-aspartate. The carbamoyl phosphate site is built by arginine 109, histidine 142, and glutamine 145. L-aspartate is bound by residues arginine 182 and arginine 253. Residues glycine 294 and proline 295 each coordinate carbamoyl phosphate.

Belongs to the aspartate/ornithine carbamoyltransferase superfamily. ATCase family. As to quaternary structure, heterododecamer (2C3:3R2) of six catalytic PyrB chains organized as two trimers (C3), and six regulatory PyrI chains organized as three dimers (R2).

It carries out the reaction carbamoyl phosphate + L-aspartate = N-carbamoyl-L-aspartate + phosphate + H(+). It participates in pyrimidine metabolism; UMP biosynthesis via de novo pathway; (S)-dihydroorotate from bicarbonate: step 2/3. In terms of biological role, catalyzes the condensation of carbamoyl phosphate and aspartate to form carbamoyl aspartate and inorganic phosphate, the committed step in the de novo pyrimidine nucleotide biosynthesis pathway. The protein is Aspartate carbamoyltransferase catalytic subunit of Prochlorococcus marinus (strain NATL1A).